The primary structure comprises 111 residues: Large ribosomal subunit protein uL22 (111 aa).

Belongs to the universal ribosomal protein uL22 family. As to quaternary structure, part of the 50S ribosomal subunit.

This protein binds specifically to 23S rRNA; its binding is stimulated by other ribosomal proteins, e.g. L4, L17, and L20. It is important during the early stages of 50S assembly. It makes multiple contacts with different domains of the 23S rRNA in the assembled 50S subunit and ribosome. Its function is as follows. The globular domain of the protein is located near the polypeptide exit tunnel on the outside of the subunit, while an extended beta-hairpin is found that lines the wall of the exit tunnel in the center of the 70S ribosome. The protein is Large ribosomal subunit protein uL22 of Francisella philomiragia subsp. philomiragia (strain ATCC 25017 / CCUG 19701 / FSC 153 / O#319-036).